Consider the following 180-residue polypeptide: Ribosome maturation factor RimM (180 aa).

The region spanning 108-180 (PDEYYWVDLE…LIVVDWDPDF (73 aa)) is the PRC barrel domain.

This sequence belongs to the RimM family. Binds ribosomal protein uS19.

Its subcellular location is the cytoplasm. An accessory protein needed during the final step in the assembly of 30S ribosomal subunit, possibly for assembly of the head region. Essential for efficient processing of 16S rRNA. May be needed both before and after RbfA during the maturation of 16S rRNA. It has affinity for free ribosomal 30S subunits but not for 70S ribosomes. This Xanthomonas euvesicatoria pv. vesicatoria (strain 85-10) (Xanthomonas campestris pv. vesicatoria) protein is Ribosome maturation factor RimM.